We begin with the raw amino-acid sequence, 225 residues long: Pyridoxine/pyridoxamine 5'-phosphate oxidase (225 aa).

Substrate contacts are provided by residues 9-12 (RVDY) and Lys-78. Residues 73 to 78 (RTVLCK), 88 to 89 (YT), Lys-95, and Gln-117 contribute to the FMN site. Residues Tyr-135, Arg-139, and Ser-143 each contribute to the substrate site. Residues 152–153 (QS) and Trp-198 each bind FMN. A substrate-binding site is contributed by 204–206 (RLH). Arg-208 serves as a coordination point for FMN.

The protein belongs to the pyridoxamine 5'-phosphate oxidase family. As to quaternary structure, homodimer. The cofactor is FMN.

The enzyme catalyses pyridoxamine 5'-phosphate + O2 + H2O = pyridoxal 5'-phosphate + H2O2 + NH4(+). The catalysed reaction is pyridoxine 5'-phosphate + O2 = pyridoxal 5'-phosphate + H2O2. Its pathway is cofactor metabolism; pyridoxal 5'-phosphate salvage; pyridoxal 5'-phosphate from pyridoxamine 5'-phosphate: step 1/1. It functions in the pathway cofactor metabolism; pyridoxal 5'-phosphate salvage; pyridoxal 5'-phosphate from pyridoxine 5'-phosphate: step 1/1. Functionally, catalyzes the oxidation of either pyridoxine 5'-phosphate (PNP) or pyridoxamine 5'-phosphate (PMP) into pyridoxal 5'-phosphate (PLP). The sequence is that of Pyridoxine/pyridoxamine 5'-phosphate oxidase from Nocardia farcinica (strain IFM 10152).